Here is a 903-residue protein sequence, read N- to C-terminus: Disintegrin and metalloproteinase domain-containing protein 12 (903 aa).

An N-terminal signal peptide occupies residues 1–31 (MAERPARRAPPARALLLALAGALLAPRAARG). The propeptide occupies 32 to 205 (MSLWDQRGTY…SQMRARRHKR (174 aa)). 3 N-linked (GlcNAc...) asparagine glycosylation sites follow: N112, N147, and N157. A Cysteine switch motif is present at residues 175-182 (GLCGSQHN). C177 serves as a coordination point for Zn(2+). N-linked (GlcNAc...) asparagine glycosylation is found at N182 and N185. The Extracellular segment spans residues 206–706 (ETLKMTKYVE…GPIRQADNQG (501 aa)). The Peptidase M12B domain occupies 212–414 (KYVELVIVAD…GMGMCLFNLP (203 aa)). Intrachain disulfides connect C323–C409, C365–C393, and C367–C376. H348 serves as a coordination point for Zn(2+). The active site involves E349. The Zn(2+) site is built by H352 and H358. Positions 422 to 508 (GRKCGNGYVE…HCPANVYLHD (87 aa)) constitute a Disintegrin domain. Residue N450 is glycosylated (N-linked (GlcNAc...) asparagine). C480 and C500 are disulfide-bonded. N649 is a glycosylation site (N-linked (GlcNAc...) asparagine). An EGF-like domain is found at 654–686 (GVHKCAMQCHGRGVCNNRKNCHCEAHWAPPFCD). 3 disulfide bridges follow: C658/C668, C662/C674, and C676/C685. Residues 707–727 (LTVGILVSILCLLAAGFVVYL) traverse the membrane as a helical segment. Topologically, residues 728–903 (KRKTLMRLLF…PRPSHNAYIK (176 aa)) are cytoplasmic. Disordered stretches follow at residues 753–790 (SRTP…HSLK) and 819–903 (HQTP…AYIK). 2 consecutive short sequence motifs (SH3-binding; class II) follow at residues 824–830 (APSGPAR) and 846–852 (KPSPPQK). 3 short sequence motifs (SH3-binding; class I) span residues 830-837 (RPLPASPA), 852-858 (KPLPADP), and 881-887 (RPAPIRP). The span at 847-856 (PSPPQKPLPA) shows a compositional bias: pro residues. A Phosphotyrosine; by SRC modification is found at Y901.

In terms of assembly, interacts with alpha-actinin-2 and with syndecans. Interacts with SH3PXD2A. Interacts with FST3. Interacts with RACK1; the interaction is required for PKC-dependent translocation of ADAM12 to the cell membrane. Zn(2+) serves as cofactor. In terms of processing, the precursor is cleaved by a furin endopeptidase. In terms of tissue distribution, expressed during early developing mesenchymal cells that give rise to skeletal muscle, bones and visceral organs. Not expressed in adult normal muscle but expressed in regenerating muscle.

The protein resides in the membrane. Involved in skeletal muscle regeneration, specifically at the onset of cell fusion. Also involved in macrophage-derived giant cells (MGC) and osteoclast formation from mononuclear precursors. This Mus musculus (Mouse) protein is Disintegrin and metalloproteinase domain-containing protein 12 (Adam12).